An 837-amino-acid chain; its full sequence is Exonuclease 1 (837 aa).

Residues 1-99 (MGIQGLLQFI…RSRRERRQSN (99 aa)) form an N-domain region. The Mg(2+) site is built by Asp30, Asp78, Glu150, Asp152, Asp171, Asp173, and Asp225. The interaction with MSH3 stretch occupies residues 129–386 (MAHKVIKAAR…RLEVNSVSHA (258 aa)). Residues 138–229 (RALGVDCLVA…ILSGCDYLAS (92 aa)) are I-domain. Disordered regions lie at residues 345–367 (TMPAHSRSHSWNEKAGQKPPGTN) and 440–477 (IKENGCGDGTSPNSSKMSKSCPDSGTAHKTDAHTPSKM). An interaction with MLH1 region spans residues 387–488 (PQLKEKPSTL…NKFATFLQRR (102 aa)). The segment covering 449–462 (TSPNSSKMSKSCPD) has biased composition (polar residues). At Lys480 the chain carries N6-acetyllysine. The segment at 555 to 589 (NGTHNLSSQIPGNAAVSPEDEAQSSETSKLLGAMS) is disordered. Residues 556–565 (GTHNLSSQIP) are compositionally biased toward polar residues. Phosphoserine occurs at positions 589 and 601. Residues 591–837 (PSLGTLRSCF…CVRAQRAIFH (247 aa)) form an interaction with MSH2 region. A disordered region spans residues 608–740 (EFSRTPSPSA…GLCRSSSMDS (133 aa)). 3 stretches are compositionally biased toward polar residues: residues 611-623 (RTPSPSASTTLQQ), 665-690 (SSRSQESMDSSCGLNTSSLSQPSSRD), and 699-713 (NNKSLDNQGEQNSKQ). Thr612 is modified (phosphothreonine). Phosphoserine is present on residues Ser614 and Ser666. Ser737 carries the post-translational modification Phosphoserine. Positions 778–837 (LQTKISELWKNFGFKKDSEKLPSCKKPLSPVKDNIQLTPETEDEIFNKPECVRAQRAIFH) are interaction with MLH1.

Belongs to the XPG/RAD2 endonuclease family. EXO1 subfamily. Interacts with the MLH1-PMS2 heterodimer via MLH1. Interacts with MSH3. Interacts with the MSH2-MSH6 heterodimer via MSH2, and this interaction may increase the processivity of the 5'-&gt;3' exonuclease activity. Interacts with PCNA, and this interaction may both stimulate the cryptic 3'-&gt;5' exonuclease activity and suppress the 5'-&gt;3' exonuclease activity. Interacts with WRN, and this interaction stimulates both the 5'-&gt;3' exonuclease activity and cleavage of 5'-overhanging flap structures. Interacts with RECQL/RECQ1, and this interaction stimulates cleavage of 5'-overhanging flap structures. Interacts with DNA helicase ZGRF1; the interaction is increased following DNA damage induction. Requires Mg(2+) as cofactor. Phosphorylated upon DNA damage and in response to agents stalling DNA replication, probably by ATM or ATR. In terms of tissue distribution, highly expressed in the spleen and testis. Also expressed in the bone marrow, brain, lung, lymph node and thymus.

It is found in the nucleus. 5'-&gt;3' double-stranded DNA exonuclease which may also possess a cryptic 3'-&gt;5' double-stranded DNA exonuclease activity. Functions in DNA mismatch repair (MMR) to excise mismatch-containing DNA tracts directed by strand breaks located either 5' or 3' to the mismatch. Also exhibits endonuclease activity against 5'-overhanging flap structures similar to those generated by displacement synthesis when DNA polymerase encounters the 5'-end of a downstream Okazaki fragment. Required for somatic hypermutation (SHM) and class switch recombination (CSR) of immunoglobulin genes. Essential for male and female meiosis. This Mus musculus (Mouse) protein is Exonuclease 1 (Exo1).